A 258-amino-acid chain; its full sequence is Archaerhodopsin-3 (258 aa).

Residues 1–6 (MDPIAL) constitute a propeptide that is removed on maturation. A Pyrrolidone carboxylic acid modification is found at Q7. Residues 7–18 (QAGYDLLGDGRP) are Extracellular-facing. Residues 19 to 40 (ETLWLGIGTLLMLIGTFYFLVR) form a helical membrane-spanning segment. The Cytoplasmic segment spans residues 41–49 (GWGVTDKDA). Residues 50–71 (REYYAVTILVPGIASAAYLSMF) traverse the membrane as a helical segment. Topologically, residues 72-89 (FGIGLTEVTVGGEMLDIY) are extracellular. A helical membrane pass occupies residues 90 to 111 (YARYADWLFTTPLLLLDLALLA). The Cytoplasmic portion of the chain corresponds to 112-114 (KVD). Residues 115 to 137 (RVTIGTLVGVDALMIVTGLIGAL) form a helical membrane-spanning segment. At 138–141 (SHTA) the chain is on the extracellular side. A helical transmembrane segment spans residues 142 to 170 (IARYSWWLFSTICMIVVLYFLATSLRSAA). Topologically, residues 171 to 173 (KER) are cytoplasmic. A helical membrane pass occupies residues 174 to 202 (GPEVASTFNTLTALVLVLWTAYPILWIIG). The Extracellular segment spans residues 203–210 (TEGAGVVG). A helical membrane pass occupies residues 211 to 243 (LGIETLLFMVLDVTAKVGFGFILLRSRAILGDT). Position 226 is an N6-(retinylidene)lysine (K226). Residues 244 to 258 (EAPEPSAGADVSAAD) lie on the Cytoplasmic side of the membrane.

It belongs to the archaeal/bacterial/fungal opsin family.

It localises to the cell membrane. In terms of biological role, light-driven proton pump. This chain is Archaerhodopsin-3 (aop3), found in Halorubrum sodomense.